We begin with the raw amino-acid sequence, 503 residues long: MDLSPRNRPLLDSSSLDSGSLTSLDSSVFCSEGEGEPLALGDCLTVNVGGSRFVLSQQALSCFPHTRLGKLAVVVASYRRLGALAAAPSPLELCDDANPVDNEYFFDRSSQAFRYVLHYYRTGRLHVMEQLCALSFLQEIQYWGIDELSIDSCCRDRYFRRKELSETLDFKKDTDDQESQHESEQDFSQGPCPTVRQKLWDILEKPGSSTAARIFGVISIIFVAVSIVNMALMSAELSWLNLQLLEILEYVCISWFTGEFILRFLCVKDRCHFLRKVPNIIDLLAILPFYITLLVESLSGSHTTQELENVGRLVQVLRLLRALRMLKLGRHSTGLRSLGMTITQCYEEVGLLLLFLSVGISIFSTIEYFAEQSIPDTTFTSVPCAWWWATTSMTTVGYGDIRPDTTTGKIVAFMCILSGILVLALPIAIINDRFSACYFTLKLKEAAVRQREALKKLTKNIATDSYISVNLRDIYARSIMEMLRLKGRERASTRSSGGDDFWF.

Disordered regions lie at residues 1 to 20 (MDLS…DSGS) and 171 to 192 (KKDT…QGPC). Residues 3–213 (LSPRNRPLLD…EKPGSSTAAR (211 aa)) are Cytoplasmic-facing. The segment covering 10 to 20 (LLDSSSLDSGS) has biased composition (low complexity). The span at 171 to 184 (KKDTDDQESQHESE) shows a compositional bias: basic and acidic residues. A helical transmembrane segment spans residues 214 to 234 (IFGVISIIFVAVSIVNMALMS). At 235–241 (AELSWLN) the chain is on the extracellular side. Residues 242-262 (LQLLEILEYVCISWFTGEFIL) form a helical membrane-spanning segment. Over 263-279 (RFLCVKDRCHFLRKVPN) the chain is Cytoplasmic. Residues 280–300 (IIDLLAILPFYITLLVESLSG) traverse the membrane as a helical segment. Topologically, residues 301–312 (SHTTQELENVGR) are extracellular. Residues 313–334 (LVQVLRLLRALRMLKLGRHSTG) form a helical; Voltage-sensor membrane-spanning segment. Topologically, residues 335 to 348 (LRSLGMTITQCYEE) are cytoplasmic. A helical membrane pass occupies residues 349-369 (VGLLLLFLSVGISIFSTIEYF). The Selectivity filter motif lies at 395–400 (TVGYGD). The chain crosses the membrane as a helical span at residues 410–430 (IVAFMCILSGILVLALPIAII). The Cytoplasmic portion of the chain corresponds to 431 to 503 (NDRFSACYFT…RSSGGDDFWF (73 aa)).

This sequence belongs to the potassium channel family. V (TC 1.A.1.2) subfamily. Kv8.1/KCNV1 sub-subfamily. As to quaternary structure, heteromultimer with KCNB1 and KCNB2. Interacts with KCNC4 and KCND1. Detected in brain, in neocortex, olfactory tubercle, hippocampus, dentate gyrus, piriform cortex and amygdala. Detected in Purkinje cells and granular cells of the cerebellum, in hippocampal CA4 neurons and neocortex pyramidal cells.

It is found in the cell membrane. Functionally, potassium channel subunit that does not form functional channels by itself. Modulates KCNB1 and KCNB2 channel activity by shifting the threshold for inactivation to more negative values and by slowing the rate of inactivation. Can down-regulate the channel activity of KCNB1, KCNB2, KCNC4 and KCND1, possibly by trapping them in intracellular membranes. The sequence is that of Potassium voltage-gated channel subfamily V member 1 (Kcnv1) from Rattus norvegicus (Rat).